We begin with the raw amino-acid sequence, 213 residues long: Probable nicotinate-nucleotide adenylyltransferase (213 aa).

The protein belongs to the NadD family.

The enzyme catalyses nicotinate beta-D-ribonucleotide + ATP + H(+) = deamido-NAD(+) + diphosphate. It functions in the pathway cofactor biosynthesis; NAD(+) biosynthesis; deamido-NAD(+) from nicotinate D-ribonucleotide: step 1/1. In terms of biological role, catalyzes the reversible adenylation of nicotinate mononucleotide (NaMN) to nicotinic acid adenine dinucleotide (NaAD). The polypeptide is Probable nicotinate-nucleotide adenylyltransferase (Trichlorobacter lovleyi (strain ATCC BAA-1151 / DSM 17278 / SZ) (Geobacter lovleyi)).